Consider the following 321-residue polypeptide: Degreening-related gene dee76 protein (321 aa).

This sequence belongs to the Mo25 family.

In Auxenochlorella protothecoides (Green microalga), this protein is Degreening-related gene dee76 protein (DEE76).